The sequence spans 223 residues: Protein phosphatase 1 regulatory subunit 3C (223 aa).

The region spanning 104 to 209 is the CBM21 domain; sequence REQLTRKLVC…NNDGKNYSLH (106 aa).

As to quaternary structure, interacts with PPP1CC catalytic subunit of PP1 and associates with glycogen. Forms complexes with glycogen phosphorylase, glycogen synthase and phosphorylase kinase which is necessary for its regulation of PP1 activity.

Acts as a glycogen-targeting subunit for PP1 and regulates its activity. Activates glycogen synthase, reduces glycogen phosphorylase activity and limits glycogen breakdown. This chain is Protein phosphatase 1 regulatory subunit 3C, found in Xenopus tropicalis (Western clawed frog).